Reading from the N-terminus, the 707-residue chain is Mitochondrial disaggregase (707 aa).

The transit peptide at 1–36 (MLGSLVLRRKALAPRLLLRLLRSPTLRGHGGASGRN) directs the protein to the mitochondrion. The autoinhibitory stretch occupies residues 92–126 (PGPEETLPGQDSWNGVPSRAGLGMCALAAALVVHC). 4 ANK repeats span residues 133–162 (NKDA…DVNA), 166–195 (LGWT…DPNL), 265–295 (KGCT…PLQR), and 298–327 (MGHT…EKQR). Residues histidine 346, isoleucine 348, serine 383, glycine 384, isoleucine 385, glycine 386, lysine 387, threonine 388, glutamate 455, and asparagine 496 each contribute to the ATP site. The tract at residues 507–535 (LQLRQEALEMSRNRIAENLGDVQISDKIT) is regulatory; slows ATPase and disaggregase activities. Arginine 561 contacts ATP. N6-acetyllysine is present on lysine 589. An ATP-binding site is contributed by arginine 620.

This sequence belongs to the ClpA/ClpB family. In terms of assembly, homododecamer when substrate-bound; the homododecamer consists of 2 homohexamers stacked head-to-head via ANK repeat-mediated interactions. The active substrate-bound form is likely to exist in a dynamic equilibrium between homohexamers and homododecamers. Homotetradecamer in the unbound state which is remodeled upon substrate binding into the homododecamer. Interacts with PHB and PHB2. Interacts with MAVS; the interaction is enhanced by Sendai virus infection. Post-translationally, proteolytically cleaved by protease PARL. ATP-dependent protein disaggregase activity is stimulated by PARL-mediated cleavage of the N-terminal autoinhibitory peptide. As to expression, widely expressed (at protein level). Expressed in fetal, as well as in adult tissues, with highest levels in adult brain, including thalamus, hippocampus, occipital cortex and parietal cortex. Low expression in granulocytes.

It is found in the mitochondrion intermembrane space. The enzyme catalyses ATP + H2O = ADP + phosphate + H(+). With respect to regulation, disaggregase activity is inhibited by ADP. In terms of biological role, functions as a regulatory ATPase and participates in secretion/protein trafficking process. Has ATP-dependent protein disaggregase activity and is required to maintain the solubility of key mitochondrial proteins. Involved in mitochondrial-mediated antiviral innate immunity, activates RIG-I-mediated signal transduction and production of IFNB1 and pro-inflammatory cytokine IL6. Plays a role in granulocyte differentiation. The polypeptide is Mitochondrial disaggregase (Homo sapiens (Human)).